A 29-amino-acid chain; its full sequence is L-serine dehydratase, beta chain (29 aa).

The protein belongs to the iron-sulfur dependent L-serine dehydratase family. In terms of assembly, heterodimer of an alpha chain and a beta chain. The cofactor is [4Fe-4S] cluster.

It catalyses the reaction L-serine = pyruvate + NH4(+). Its pathway is carbohydrate biosynthesis; gluconeogenesis. The chain is L-serine dehydratase, beta chain from Anaerotignum propionicum (Clostridium propionicum).